The primary structure comprises 83 residues: U5-theraphotoxin-Hs1d (83 aa).

A signal peptide spans 1–21 (MKTSMFLTLTGLVLLFVVCYA). A propeptide spanning residues 22–49 (SESEEKEFPKELLSSIFAADSDFKVEER) is cleaved from the precursor. Cystine bridges form between C51–C63, C56–C68, and C62–C75.

The protein belongs to the neurotoxin 10 (Hwtx-1) family. 51 (Hntx-8) subfamily. Hntx-8 sub-subfamily. In terms of tissue distribution, expressed by the venom gland.

It localises to the secreted. Functionally, agglutinates erythrocytes. The protein is U5-theraphotoxin-Hs1d of Cyriopagopus schmidti (Chinese bird spider).